A 132-amino-acid polypeptide reads, in one-letter code: Small ribosomal subunit protein uS8 (132 aa).

Belongs to the universal ribosomal protein uS8 family. In terms of assembly, part of the 30S ribosomal subunit. Contacts proteins S5 and S12.

In terms of biological role, one of the primary rRNA binding proteins, it binds directly to 16S rRNA central domain where it helps coordinate assembly of the platform of the 30S subunit. This is Small ribosomal subunit protein uS8 from Anaplasma marginale (strain Florida).